We begin with the raw amino-acid sequence, 550 residues long: Cytokinin dehydrogenase 10 (550 aa).

The N-terminal stretch at 1 to 26 is a signal peptide; sequence MMPRAQLTTFLIVTSFLSTVPYLRAP. Positions 64-245 constitute an FAD-binding PCMH-type domain; the sequence is VHATPNGVFR…TRARIRLEPA (182 aa). Positions 100, 101, and 102 each coordinate FAD. A Pros-8alpha-FAD histidine modification is found at His-103. Ser-104, Gln-108, Asp-169, Thr-174, Ser-180, Ile-184, and Ile-235 together coordinate FAD. N-linked (GlcNAc...) asparagine glycosylation occurs at Asn-289. FAD contacts are provided by Tyr-489, Ser-524, and Gln-527. The interval 523-550 is disordered; it reads LSPGQGIFPPPPPPSPPPPAAGEPITAS. The segment covering 530–543 has biased composition (pro residues); sequence FPPPPPPSPPPPAA.

Belongs to the oxygen-dependent FAD-linked oxidoreductase family. As to quaternary structure, monomer. FAD serves as cofactor.

The protein resides in the secreted. The protein localises to the extracellular space. The enzyme catalyses N(6)-dimethylallyladenine + A + H2O = 3-methyl-2-butenal + adenine + AH2. Catalyzes the oxidation of cytokinins, a family of N(6)-substituted adenine derivatives that are plant hormones, where the substituent is an isopentenyl group. The chain is Cytokinin dehydrogenase 10 (CKX10) from Oryza sativa subsp. japonica (Rice).